Consider the following 1198-residue polypeptide: Fibronectin type-III domain-containing protein 3a (1198 aa).

A compositionally biased stretch (basic and acidic residues) spans 189 to 201 (KLKDRHGTQKDKL). Residues 189–256 (KLKDRHGTQK…SQTDVEIEEK (68 aa)) form a disordered region. Positions 229-247 (GISTGSTKSKSVGKGKSNS) are enriched in low complexity. 9 Fibronectin type-III domains span residues 269 to 370 (NIAK…TMSC), 374 to 466 (APNL…TSGT), 470 to 563 (TPAS…TCPD), 567 to 661 (APSK…TPAV), 665 to 758 (PCQP…TAPG), 762 to 852 (QCKP…TPAS), 864 to 951 (SEDE…TKPL), 952 to 1045 (PPDP…TPKS), and 1046 to 1151 (VPAA…TEPP). Residues 553-574 (SETVDYTTCPDKPGAPSKPSVK) are disordered. A helical transmembrane segment spans residues 1172–1192 (VCAAVILALFAIFSILIAVII).

This sequence belongs to the FNDC3 family.

It localises to the golgi apparatus membrane. This is Fibronectin type-III domain-containing protein 3a (FNDC3A) from Gallus gallus (Chicken).